The sequence spans 60 residues: Acrosin (60 aa).

An N-linked (GlcNAc...) asparagine glycan is attached at Asn-3. One can recognise a Peptidase S1 domain in the interval 24 to 60 (IIGGQDAAHGSWPWMVSLQIFTYHNNRRYHVCGGSLL).

This sequence belongs to the peptidase S1 family. As to quaternary structure, heavy chain (catalytic) and a light chain linked by two disulfide bonds. Forms a heterodimer with SERPINA5.

The catalysed reaction is Preferential cleavage: Arg-|-Xaa, Lys-|-Xaa.. Inhibited by SERPINA5. Acrosin is the major protease of mammalian spermatozoa. It is a serine protease of trypsin-like cleavage specificity, it is synthesized in a zymogen form, proacrosin and stored in the acrosome. In Capra hircus (Goat), this protein is Acrosin (ACR).